Here is a 458-residue protein sequence, read N- to C-terminus: Exodeoxyribonuclease 7 large subunit (458 aa).

The protein belongs to the XseA family. As to quaternary structure, heterooligomer composed of large and small subunits.

It is found in the cytoplasm. It catalyses the reaction Exonucleolytic cleavage in either 5'- to 3'- or 3'- to 5'-direction to yield nucleoside 5'-phosphates.. In terms of biological role, bidirectionally degrades single-stranded DNA into large acid-insoluble oligonucleotides, which are then degraded further into small acid-soluble oligonucleotides. The protein is Exodeoxyribonuclease 7 large subunit of Geobacter sp. (strain M21).